The sequence spans 184 residues: MGLDKFKDKNRDELSMIEVARAILEDNGKRMAFADIVNAVQKYLNKSDEEIRERLPQFYTDMNTDGEFISMGENVWALRSWFPYESVDEEVNHPEDEEEDDSRKHHKKVNAFLASATGDDDIIDYDNDDPEDDDLDAATDDSDDDYSDDDSDYDEDNDDADDVLPDGIEGQLSQLNDEDDDEDD.

Residues 14–81 (LSMIEVARAI…GENVWALRSW (68 aa)) enclose the HTH HARE-type domain. Disordered regions lie at residues 88–107 (DEEVNHPEDEEEDDSRKHHK) and 118–184 (GDDD…DEDD). The span at 118–164 (GDDDIIDYDNDDPEDDDLDAATDDSDDDYSDDDSDYDEDNDDADDVL) shows a compositional bias: acidic residues.

Belongs to the RpoE family. RNAP is composed of a core of 2 alpha, a beta and a beta' subunits. The core is associated with a delta subunit and one of several sigma factors.

In terms of biological role, participates in both the initiation and recycling phases of transcription. In the presence of the delta subunit, RNAP displays an increased specificity of transcription, a decreased affinity for nucleic acids, and an increased efficiency of RNA synthesis because of enhanced recycling. The polypeptide is Probable DNA-directed RNA polymerase subunit delta (Lactobacillus acidophilus (strain ATCC 700396 / NCK56 / N2 / NCFM)).